The primary structure comprises 315 residues: Spermidine synthase 1 (315 aa).

Residues 25 to 262 form the PABS domain; sequence PGWFSEISPL…GMIGFMLCST (238 aa). An S-adenosyl 3-(methylsulfanyl)propylamine-binding site is contributed by Q56. Y86 is a putrescine binding site. S-adenosyl 3-(methylsulfanyl)propylamine is bound by residues Q87, D111, E131, 162 to 163, and D181; that span reads DG. The Proton acceptor role is filled by D181. Residues 181-184 and Y250 contribute to the putrescine site; that span reads DSSD.

Belongs to the spermidine/spermine synthase family.

The catalysed reaction is S-adenosyl 3-(methylsulfanyl)propylamine + putrescine = S-methyl-5'-thioadenosine + spermidine + H(+). It functions in the pathway amine and polyamine biosynthesis; spermidine biosynthesis; spermidine from putrescine: step 1/1. This Hyoscyamus niger (Black henbane) protein is Spermidine synthase 1.